We begin with the raw amino-acid sequence, 139 residues long: MKKGTVLNSEISSVISHLGHTDTLVVCDAGLPIPNSTARIDMALTQGVPSFMQVVDVVTREMQVEAAILATEIKQQNPQLHETLLTHLEQLQQHQGNTIKISYTTHEQFKKLTADSQAVIRSGECSPYANVILCAGVTF.

Residue histidine 20 is the Proton donor of the active site. Residues aspartate 28, histidine 106, and 128–130 contribute to the substrate site; that span reads YAN.

The protein belongs to the RbsD / FucU family. RbsD subfamily. In terms of assembly, homodecamer.

The protein localises to the cytoplasm. It carries out the reaction beta-D-ribopyranose = beta-D-ribofuranose. Its pathway is carbohydrate metabolism; D-ribose degradation; D-ribose 5-phosphate from beta-D-ribopyranose: step 1/2. In terms of biological role, catalyzes the interconversion of beta-pyran and beta-furan forms of D-ribose. This is D-ribose pyranase from Salmonella paratyphi B (strain ATCC BAA-1250 / SPB7).